The following is a 383-amino-acid chain: Erythronate-4-phosphate dehydrogenase (383 aa).

Substrate-binding residues include serine 45 and threonine 66. NAD(+)-binding positions include aspartate 146, threonine 174, alanine 205–arginine 207, and aspartate 231. Residue arginine 207 is part of the active site. The active site involves glutamate 236. The active-site Proton donor is histidine 253. Residue glycine 256 participates in NAD(+) binding. Tyrosine 257 serves as a coordination point for substrate.

Belongs to the D-isomer specific 2-hydroxyacid dehydrogenase family. PdxB subfamily. As to quaternary structure, homodimer.

It is found in the cytoplasm. It catalyses the reaction 4-phospho-D-erythronate + NAD(+) = (R)-3-hydroxy-2-oxo-4-phosphooxybutanoate + NADH + H(+). Its pathway is cofactor biosynthesis; pyridoxine 5'-phosphate biosynthesis; pyridoxine 5'-phosphate from D-erythrose 4-phosphate: step 2/5. Catalyzes the oxidation of erythronate-4-phosphate to 3-hydroxy-2-oxo-4-phosphonooxybutanoate. The polypeptide is Erythronate-4-phosphate dehydrogenase (Pseudomonas entomophila (strain L48)).